Here is a 73-residue protein sequence, read N- to C-terminus: uncharacterized protein (73 aa).

This is an uncharacterized protein from Vertebrata (FPV).